The primary structure comprises 66 residues: Photosystem II reaction center protein J (66 aa).

The segment at 1–27 (MSGKKSGLPDGRVPDRNPDGTPAVPWK) is disordered. The helical transmembrane segment at 37-57 (LWLVATAGGMAVMFVVGLFFY) threads the bilayer.

This sequence belongs to the PsbJ family. As to quaternary structure, PSII is composed of 1 copy each of membrane proteins PsbA, PsbB, PsbC, PsbD, PsbE, PsbF, PsbH, PsbI, PsbJ, PsbK, PsbL, PsbM, PsbT, PsbX, PsbY, PsbZ, Psb30/Ycf12, peripheral proteins PsbO, CyanoQ (PsbQ), PsbU, PsbV and a large number of cofactors. It forms dimeric complexes.

It localises to the cellular thylakoid membrane. In terms of biological role, one of the components of the core complex of photosystem II (PSII). PSII is a light-driven water:plastoquinone oxidoreductase that uses light energy to abstract electrons from H(2)O, generating O(2) and a proton gradient subsequently used for ATP formation. It consists of a core antenna complex that captures photons, and an electron transfer chain that converts photonic excitation into a charge separation. In Synechococcus sp. (strain RCC307), this protein is Photosystem II reaction center protein J.